Here is a 120-residue protein sequence, read N- to C-terminus: Large ribosomal subunit protein bL12 (120 aa).

Belongs to the bacterial ribosomal protein bL12 family. In terms of assembly, homodimer. Part of the ribosomal stalk of the 50S ribosomal subunit. Forms a multimeric L10(L12)X complex, where L10 forms an elongated spine to which 2 to 4 L12 dimers bind in a sequential fashion. Binds GTP-bound translation factors.

Functionally, forms part of the ribosomal stalk which helps the ribosome interact with GTP-bound translation factors. Is thus essential for accurate translation. The polypeptide is Large ribosomal subunit protein bL12 (Brevibacillus brevis (strain 47 / JCM 6285 / NBRC 100599)).